The primary structure comprises 130 residues: Zinc finger A20 and AN1 domain-containing stress-associated protein 10 (130 aa).

Residues 4-38 (ETEALPCEGGCGLYGTRVNNNLCSLCYKKSVLQHS) form an A20-type zinc finger. Zn(2+) contacts are provided by cysteine 10, cysteine 14, cysteine 26, cysteine 29, cysteine 71, cysteine 74, cysteine 85, cysteine 87, cysteine 92, histidine 95, histidine 101, and cysteine 103. An AN1-type zinc finger spans residues 65 to 111 (PVKKRRCGICKRKVGMLGFKCRCGHMFCGSHRYPEEHSCPFDYKQSG).

May be involved in environmental stress response. The chain is Zinc finger A20 and AN1 domain-containing stress-associated protein 10 (SAP10) from Arabidopsis thaliana (Mouse-ear cress).